The primary structure comprises 598 residues: Elongation factor 4 (598 aa).

Positions 3–185 (QHIRNFSIIA…MIVARIPPPE (183 aa)) constitute a tr-type G domain. GTP is bound by residues 15–20 (DHGKST) and 132–135 (NKID).

It belongs to the TRAFAC class translation factor GTPase superfamily. Classic translation factor GTPase family. LepA subfamily.

It localises to the cell inner membrane. The enzyme catalyses GTP + H2O = GDP + phosphate + H(+). Required for accurate and efficient protein synthesis under certain stress conditions. May act as a fidelity factor of the translation reaction, by catalyzing a one-codon backward translocation of tRNAs on improperly translocated ribosomes. Back-translocation proceeds from a post-translocation (POST) complex to a pre-translocation (PRE) complex, thus giving elongation factor G a second chance to translocate the tRNAs correctly. Binds to ribosomes in a GTP-dependent manner. This is Elongation factor 4 from Nitrosomonas eutropha (strain DSM 101675 / C91 / Nm57).